A 367-amino-acid polypeptide reads, in one-letter code: tRNA-specific 2-thiouridylase MnmA (367 aa).

ATP is bound by residues 12–19 and methionine 38; that span reads GMSGGVDS. Residues 98–100 form an interaction with target base in tRNA region; that stretch reads NPD. The Nucleophile role is filled by cysteine 103. Cysteine 103 and cysteine 200 are joined by a disulfide. Glycine 128 is a binding site for ATP. The interaction with tRNA stretch occupies residues 150–152; the sequence is KDQ. Cysteine 200 serves as the catalytic Cysteine persulfide intermediate. The segment at 312-313 is interaction with tRNA; that stretch reads RY.

It belongs to the MnmA/TRMU family.

It localises to the cytoplasm. The enzyme catalyses S-sulfanyl-L-cysteinyl-[protein] + uridine(34) in tRNA + AH2 + ATP = 2-thiouridine(34) in tRNA + L-cysteinyl-[protein] + A + AMP + diphosphate + H(+). Its function is as follows. Catalyzes the 2-thiolation of uridine at the wobble position (U34) of tRNA, leading to the formation of s(2)U34. The protein is tRNA-specific 2-thiouridylase MnmA of Psychromonas ingrahamii (strain DSM 17664 / CCUG 51855 / 37).